The chain runs to 102 residues: Protein 108 (102 aa).

Residues Met-1–Ser-30 form the signal peptide. 4 cysteine pairs are disulfide-bonded: Cys-41/Cys-77, Cys-51/Cys-66, Cys-67/Cys-92, and Cys-79/Cys-99.

Belongs to the A9/FIL1 family. As to expression, stamen- and tapetum-specific.

Its subcellular location is the secreted. This Solanum lycopersicum (Tomato) protein is Protein 108.